The following is a 218-amino-acid chain: Adenylate kinase (218 aa).

10–15 (GAGKGT) serves as a coordination point for ATP. Residues 30 to 59 (STGDMLRAAVKAGTPLGQQAKAVMDAGKLV) form an NMP region. Residues Thr31, Arg36, 57–59 (KLV), 85–88 (GFPR), and Gln92 each bind AMP. The tract at residues 122-159 (GRRSHPASGRTYHVKFNPPKVEGKDDVTGEDLIQREDD) is LID. Residues Arg123 and 132 to 133 (TY) each bind ATP. A disordered region spans residues 127–147 (PASGRTYHVKFNPPKVEGKDD). Residues Arg156 and Arg167 each contribute to the AMP site. An ATP-binding site is contributed by Gly203.

Belongs to the adenylate kinase family. In terms of assembly, monomer.

It is found in the cytoplasm. It catalyses the reaction AMP + ATP = 2 ADP. It functions in the pathway purine metabolism; AMP biosynthesis via salvage pathway; AMP from ADP: step 1/1. Catalyzes the reversible transfer of the terminal phosphate group between ATP and AMP. Plays an important role in cellular energy homeostasis and in adenine nucleotide metabolism. This chain is Adenylate kinase, found in Paracidovorax citrulli (strain AAC00-1) (Acidovorax citrulli).